Consider the following 447-residue polypeptide: 23S rRNA (uracil(1939)-C(5))-methyltransferase RlmD (447 aa).

In terms of domain architecture, TRAM spans Arg-7–Glu-66. Cys-79, Cys-85, Cys-88, and Cys-168 together coordinate [4Fe-4S] cluster. Residues Gln-275, Phe-304, Asn-309, Glu-325, Asp-352, and Asp-374 each contribute to the S-adenosyl-L-methionine site. Cys-400 acts as the Nucleophile in catalysis.

Belongs to the class I-like SAM-binding methyltransferase superfamily. RNA M5U methyltransferase family. RlmD subfamily.

The enzyme catalyses uridine(1939) in 23S rRNA + S-adenosyl-L-methionine = 5-methyluridine(1939) in 23S rRNA + S-adenosyl-L-homocysteine + H(+). Functionally, catalyzes the formation of 5-methyl-uridine at position 1939 (m5U1939) in 23S rRNA. The sequence is that of 23S rRNA (uracil(1939)-C(5))-methyltransferase RlmD from Nitrosococcus oceani (strain ATCC 19707 / BCRC 17464 / JCM 30415 / NCIMB 11848 / C-107).